The following is a 276-amino-acid chain: Elongation factor Ts (276 aa).

Residues 80 to 83 form an involved in Mg(2+) ion dislocation from EF-Tu region; it reads TDFV.

This sequence belongs to the EF-Ts family.

It localises to the cytoplasm. Its function is as follows. Associates with the EF-Tu.GDP complex and induces the exchange of GDP to GTP. It remains bound to the aminoacyl-tRNA.EF-Tu.GTP complex up to the GTP hydrolysis stage on the ribosome. The chain is Elongation factor Ts from Acidothermus cellulolyticus (strain ATCC 43068 / DSM 8971 / 11B).